Consider the following 236-residue polypeptide: Rho-related GTP-binding protein RhoV (236 aa).

The interval 1–28 (MPPRELSEAEPPPLPASTPPPRRRSAPP) is disordered. Residues 10 to 20 (EPPPLPASTPP) show a composition bias toward pro residues. S25 is modified (phosphoserine). GTP-binding positions include 38-45 (GDGAVGKS), 85-89 (DTAGQ), and 143-146 (TQAD). C234 is lipidated: S-palmitoyl cysteine.

It belongs to the small GTPase superfamily. Rho family. Interacts with PAK2. The cofactor is Mg(2+). Highly expressed in brain and testis and at lower levels in spleen and lung.

It is found in the cell membrane. The protein localises to the endosome membrane. Functionally, plays a role in the control of the actin cytoskeleton via activation of the JNK pathway. This chain is Rho-related GTP-binding protein RhoV, found in Rattus norvegicus (Rat).